A 169-amino-acid chain; its full sequence is uncharacterized protein (169 aa).

It is found in the mitochondrion. This is an uncharacterized protein from Marchantia polymorpha (Common liverwort).